Reading from the N-terminus, the 359-residue chain is DNA polymerase IV (359 aa).

The 181-residue stretch at 4–184 (IVHVDMDAFY…LPVNRIPGVG (181 aa)) folds into the UmuC domain. Residues aspartate 8 and aspartate 102 each coordinate Mg(2+). Residue glutamate 103 is part of the active site.

This sequence belongs to the DNA polymerase type-Y family. As to quaternary structure, monomer. Mg(2+) is required as a cofactor.

It localises to the cytoplasm. It catalyses the reaction DNA(n) + a 2'-deoxyribonucleoside 5'-triphosphate = DNA(n+1) + diphosphate. Functionally, poorly processive, error-prone DNA polymerase involved in untargeted mutagenesis. Copies undamaged DNA at stalled replication forks, which arise in vivo from mismatched or misaligned primer ends. These misaligned primers can be extended by PolIV. Exhibits no 3'-5' exonuclease (proofreading) activity. May be involved in translesional synthesis, in conjunction with the beta clamp from PolIII. This chain is DNA polymerase IV, found in Xanthomonas campestris pv. campestris (strain 8004).